We begin with the raw amino-acid sequence, 359 residues long: Large ribosomal subunit protein uL3 (359 aa).

Residues valine 336–glutamine 359 form a disordered region.

The protein belongs to the universal ribosomal protein uL3 family. As to quaternary structure, part of the 50S ribosomal subunit. Forms a cluster with proteins L14 and L24e.

In terms of biological role, one of the primary rRNA binding proteins, it binds directly near the 3'-end of the 23S rRNA, where it nucleates assembly of the 50S subunit. The chain is Large ribosomal subunit protein uL3 from Thermococcus sibiricus (strain DSM 12597 / MM 739).